The primary structure comprises 209 residues: CMRF35-like molecule 7 (209 aa).

The N-terminal stretch at Met1–Ser17 is a signal peptide. The 103-residue stretch at Ile18 to Asn120 folds into the Ig-like V-type domain. Topologically, residues Ile18–Tyr157 are extracellular. The cysteines at positions 36 and 104 are disulfide-linked. Asn97 carries N-linked (GlcNAc...) asparagine glycosylation. A helical transmembrane segment spans residues Met158–Leu178. Residues Lys179–Pro209 lie on the Cytoplasmic side of the membrane. At Ser196 the chain carries Phosphoserine.

Belongs to the CD300 family. In terms of assembly, interacts with TYROBP, which enhances cell surface expression and activation properties. May interact with HCST. Post-translationally, N-glycosylated. In terms of tissue distribution, expressed in myeloid cells (at protein level).

The protein localises to the cell membrane. In terms of biological role, acts as an activating immune receptor in mast cells through its interaction with ITAM-bearing adapter TYROBP. The chain is CMRF35-like molecule 7 (Cd300lb) from Mus musculus (Mouse).